A 113-amino-acid polypeptide reads, in one-letter code: Transcriptional regulator RamA (113 aa).

Residues Asp-9–Glu-107 form the HTH araC/xylS-type domain. DNA-binding regions (H-T-H motif) lie at residues Asp-26–Lys-47 and Val-74–Phe-97.

In terms of biological role, transcriptional regulator. Binds to regulatory regions of target genes, including efflux pump operon acrAB and outer membrane protein gene tolC. Represses transcription of genes belonging to the flagellar regulon, including flhD, flhB and fliC; probably thereby leading to repression of motility. Represses expression of the flhDC operon in a post-transcriptional manner. Activates expression of acrAB, perhaps thereby conferring multidrug resistance. Involved in indole- and bile-mediated regulation of acrAB; binding of bile to RamA may contribute to activation of expression of acrAB. Plays a role in regulating virulence in mice. In Salmonella typhimurium (strain LT2 / SGSC1412 / ATCC 700720), this protein is Transcriptional regulator RamA.